The chain runs to 682 residues: Potassium-transporting ATPase ATP-binding subunit (682 aa).

4 helical membrane passes run 34–54, 58–78, 219–239, and 254–274; these read PVMF…LAMV, IAGS…TVLF, IALT…TATL, and VLVA…LSAI. D307 functions as the 4-aspartylphosphate intermediate in the catalytic mechanism. ATP contacts are provided by residues D344, E348, 377 to 384, and K395; that span reads FTAQSRMS. Mg(2+) contacts are provided by D518 and D522. 3 helical membrane passes run 588–608, 616–636, and 662–682; these read FAII…LNVM, AILS…PLAL, and LVVP…LGLA.

It belongs to the cation transport ATPase (P-type) (TC 3.A.3) family. Type IA subfamily. The system is composed of three essential subunits: KdpA, KdpB and KdpC.

Its subcellular location is the cell inner membrane. The enzyme catalyses K(+)(out) + ATP + H2O = K(+)(in) + ADP + phosphate + H(+). In terms of biological role, part of the high-affinity ATP-driven potassium transport (or Kdp) system, which catalyzes the hydrolysis of ATP coupled with the electrogenic transport of potassium into the cytoplasm. This subunit is responsible for energy coupling to the transport system and for the release of the potassium ions to the cytoplasm. This chain is Potassium-transporting ATPase ATP-binding subunit, found in Salmonella agona (strain SL483).